The primary structure comprises 281 residues: Diphthine methyl ester synthase (281 aa).

Residues L9, D84, G87, 112-113 (SI), and L163 each bind S-adenosyl-L-methionine. The residue at position 171 (S171) is a Phosphoserine. Positions 225 and 250 each coordinate S-adenosyl-L-methionine.

Belongs to the diphthine synthase family.

It carries out the reaction 2-[(3S)-amino-3-carboxypropyl]-L-histidyl-[translation elongation factor 2] + 4 S-adenosyl-L-methionine = diphthine methyl ester-[translation elongation factor 2] + 4 S-adenosyl-L-homocysteine + 3 H(+). Its pathway is protein modification; peptidyl-diphthamide biosynthesis. Its function is as follows. S-adenosyl-L-methionine-dependent methyltransferase that catalyzes four methylations of the modified target histidine residue in translation elongation factor 2 (EF-2), to form an intermediate called diphthine methyl ester. The four successive methylation reactions represent the second step of diphthamide biosynthesis. The sequence is that of Diphthine methyl ester synthase (Dph5) from Mus musculus (Mouse).